We begin with the raw amino-acid sequence, 150 residues long: Dihydroneopterin triphosphate diphosphatase (150 aa).

Residues 5-146 (VYKRPVSILV…SNRQAIEQFV (142 aa)) enclose the Nudix hydrolase domain. Residues Lys7, Arg29, and Thr40 each contribute to the substrate site. The short motif at 41 to 62 (GSVEEGETAPQAAMREVKEEVT) is the Nudix box element. The Mg(2+) site is built by Glu56 and Glu60. 81-84 (FEIF) is a substrate binding site. Glu117 provides a ligand contact to Mg(2+). Ser135 lines the substrate pocket.

The protein belongs to the Nudix hydrolase family. The cofactor is Mg(2+).

The enzyme catalyses 7,8-dihydroneopterin 3'-triphosphate + H2O = 7,8-dihydroneopterin 3'-phosphate + diphosphate + H(+). In terms of biological role, catalyzes the hydrolysis of dihydroneopterin triphosphate to dihydroneopterin monophosphate and pyrophosphate. Required for efficient folate biosynthesis. Can also hydrolyze nucleoside triphosphates with a preference for dATP. This Escherichia coli O157:H7 protein is Dihydroneopterin triphosphate diphosphatase (nudB).